The sequence spans 282 residues: uncharacterized protein (282 aa).

6 consecutive transmembrane segments (helical) span residues 18-38, 40-60, 87-107, 119-139, 164-184, and 260-280; these read PIVLLIPVPGSSVIHDLWAGT, LLVVFGISVLLTFYPGWVTIG, LWIVLAIGFLTAALAGGTPVV, ALHFLRITALSVVLLALGAMV, IPVDEWAVALALALRAFPMLI, and VTLAITAMASGTAVAIESLIL.

It belongs to the CbiQ family.

Its subcellular location is the cell membrane. This is an uncharacterized protein from Mycobacterium tuberculosis (strain CDC 1551 / Oshkosh).